Consider the following 160-residue polypeptide: Transcription elongation factor GreA (160 aa).

Residues 3–84 (NIVDDKILLT…SKAKIIKADL (82 aa)) are a coiled coil.

The protein belongs to the GreA/GreB family.

Necessary for efficient RNA polymerase transcription elongation past template-encoded arresting sites. The arresting sites in DNA have the property of trapping a certain fraction of elongating RNA polymerases that pass through, resulting in locked ternary complexes. Cleavage of the nascent transcript by cleavage factors such as GreA or GreB allows the resumption of elongation from the new 3'terminus. GreA releases sequences of 2 to 3 nucleotides. The protein is Transcription elongation factor GreA of Mesomycoplasma hyopneumoniae (strain J / ATCC 25934 / NCTC 10110) (Mycoplasma hyopneumoniae).